A 293-amino-acid chain; its full sequence is Thiamine-monophosphate kinase (293 aa).

Positions 25, 39, 40, 68, and 113 each coordinate Mg(2+). ATP is bound by residues 112–113 and Arg-136; that span reads GD. Residue Asp-194 participates in Mg(2+) binding. Ser-196 contributes to the ATP binding site. Asp-197 contributes to the Mg(2+) binding site. Substrate contacts are provided by Glu-243 and Trp-286.

It belongs to the thiamine-monophosphate kinase family. In terms of assembly, homodimer.

The catalysed reaction is thiamine phosphate + ATP = thiamine diphosphate + ADP. It functions in the pathway cofactor biosynthesis; thiamine diphosphate biosynthesis; thiamine diphosphate from thiamine phosphate: step 1/1. Its activity is regulated as follows. Is inhibited by AMP; the mode of AMP inhibition is uncompetitive for both TMP and ATP. Functionally, catalyzes the ATP-dependent phosphorylation of thiamine-monophosphate (TMP) to form thiamine-pyrophosphate (TPP), the active form of vitamin B1. This is Thiamine-monophosphate kinase from Pyrobaculum calidifontis (strain DSM 21063 / JCM 11548 / VA1).